The following is a 520-amino-acid chain: Ribonuclease Y (520 aa).

A helical transmembrane segment spans residues 5–25; it reads ITIISSLLFLIVGLVVGSLIF. Positions 70-127 are disordered; sequence RTEIENELRGRRTETQKAENRLLQREENLDRKDTSLSKREATLERKEESISKRQQQIE. The KH domain maps to 210 to 273; that stretch reads TVSVVTLPND…EIARIALEKL (64 aa). An HD domain is found at 336–429; it reads VLNHSLEVSK…VAAADALSAA (94 aa).

The protein belongs to the RNase Y family.

It localises to the cell membrane. In terms of biological role, endoribonuclease that initiates mRNA decay. This Listeria welshimeri serovar 6b (strain ATCC 35897 / DSM 20650 / CCUG 15529 / CIP 8149 / NCTC 11857 / SLCC 5334 / V8) protein is Ribonuclease Y.